A 987-amino-acid chain; its full sequence is Transposase for transposon Tn4430 (987 aa).

Belongs to the transposase 7 family.

In terms of biological role, required for transposition of transposon Tn4430. The chain is Transposase for transposon Tn4430 (tnpA) from Bacillus thuringiensis.